A 95-amino-acid polypeptide reads, in one-letter code: Cell division topological specificity factor (95 aa).

Belongs to the MinE family.

In terms of biological role, prevents the cell division inhibition by proteins MinC and MinD at internal division sites while permitting inhibition at polar sites. This ensures cell division at the proper site by restricting the formation of a division septum at the midpoint of the long axis of the cell. The chain is Cell division topological specificity factor from Methylorubrum extorquens (strain PA1) (Methylobacterium extorquens).